We begin with the raw amino-acid sequence, 88 residues long: MSKGTPSLGKRHNKSHVLCNRCGKRSFHVQKKTCASCGYPAAKLRSHNWATKAKRRRTTGTGRMAYLKHVSRRFKNGFQTGVAKPQSA.

C19, C22, C34, and C37 together coordinate Zn(2+). The C4-type zinc-finger motif lies at 19 to 37; that stretch reads CNRCGKRSFHVQKKTCASC.

This sequence belongs to the eukaryotic ribosomal protein eL37 family. The cofactor is Zn(2+).

Binds to the 23S rRNA. The sequence is that of Large ribosomal subunit protein eL37 (RPL37) from Debaryomyces hansenii (strain ATCC 36239 / CBS 767 / BCRC 21394 / JCM 1990 / NBRC 0083 / IGC 2968) (Yeast).